A 279-amino-acid chain; its full sequence is Inorganic pyrophosphatase 2 (279 aa).

Aspartate 12 acts as the Nucleophile in catalysis. Mg(2+) contacts are provided by aspartate 12 and aspartate 14. Aspartate 14 (proton donor) is an active-site residue. Substrate is bound by residues aspartate 23 and aspartate 98. Aspartate 182 is a Mg(2+) binding site.

This sequence belongs to the HAD-like hydrolase superfamily. In terms of assembly, tetramer. It depends on Mg(2+) as a cofactor.

The catalysed reaction is diphosphate + H2O = 2 phosphate + H(+). In terms of biological role, catalyzes the specific cleavage of pyrophosphate. In Arabidopsis thaliana (Mouse-ear cress), this protein is Inorganic pyrophosphatase 2.